The sequence spans 185 residues: Elongation factor P (185 aa).

It belongs to the elongation factor P family.

The protein localises to the cytoplasm. It participates in protein biosynthesis; polypeptide chain elongation. Functionally, involved in peptide bond synthesis. Stimulates efficient translation and peptide-bond synthesis on native or reconstituted 70S ribosomes in vitro. Probably functions indirectly by altering the affinity of the ribosome for aminoacyl-tRNA, thus increasing their reactivity as acceptors for peptidyl transferase. This chain is Elongation factor P, found in Microcystis aeruginosa (strain NIES-843 / IAM M-2473).